The chain runs to 73 residues: MPALHIEDLPEKEKLKMEVEQLRKEVKLQRQQVSKCSEEIKNYIEERSGEDPLVKGIPEDKNPFKEKGSCVIS.

Residues 51 to 73 are disordered; the sequence is DPLVKGIPEDKNPFKEKGSCVIS. Cysteine methyl ester is present on Cys70. Cys70 carries S-farnesyl cysteine lipidation. A propeptide spans 71–73 (removed in mature form); sequence VIS.

The protein belongs to the G protein gamma family. In terms of assembly, g proteins are composed of 3 units, alpha, beta and gamma. Interacts with beta-1 and beta-3, but not with beta-2. Abundantly expressed in all tissues tested except for brain.

It localises to the cell membrane. In terms of biological role, guanine nucleotide-binding proteins (G proteins) are involved as a modulator or transducer in various transmembrane signaling systems. The beta and gamma chains are required for the GTPase activity, for replacement of GDP by GTP, and for G protein-effector interaction. In Homo sapiens (Human), this protein is Guanine nucleotide-binding protein G(I)/G(S)/G(O) subunit gamma-11 (GNG11).